Here is a 903-residue protein sequence, read N- to C-terminus: KAT8 regulatory NSL complex subunit 1-like protein (903 aa).

3 disordered regions span residues 319–343 (DSDATGSSSDEDWDEKARQNSDECN), 419–441 (MPKSPQGTNPSPTNDLDMSPSSP), and 652–676 (TECTSSYSPDPQTPAHSWERRHRSE). 2 stretches are compositionally biased toward polar residues: residues 423-441 (PQGTNPSPTNDLDMSPSSP) and 652-661 (TECTSSYSPD). The 115-residue stretch at 748 to 862 (EIITPSWKEV…ESPKGKTIHW (115 aa)) folds into the PEHE domain.

The polypeptide is KAT8 regulatory NSL complex subunit 1-like protein (kansl1l) (Xenopus tropicalis (Western clawed frog)).